Reading from the N-terminus, the 387-residue chain is 3-ketoacyl-CoA thiolase (387 aa).

The active-site Acyl-thioester intermediate is Cys91. Catalysis depends on proton acceptor residues His343 and Cys373.

It belongs to the thiolase-like superfamily. Thiolase family. As to quaternary structure, heterotetramer of two alpha chains (FadB) and two beta chains (FadA).

It is found in the cytoplasm. The catalysed reaction is an acyl-CoA + acetyl-CoA = a 3-oxoacyl-CoA + CoA. The protein operates within lipid metabolism; fatty acid beta-oxidation. In terms of biological role, catalyzes the final step of fatty acid oxidation in which acetyl-CoA is released and the CoA ester of a fatty acid two carbons shorter is formed. The chain is 3-ketoacyl-CoA thiolase from Shewanella denitrificans (strain OS217 / ATCC BAA-1090 / DSM 15013).